Consider the following 334-residue polypeptide: L-lactate dehydrogenase B-B chain (334 aa).

NAD(+) is bound by residues glycine 30–lysine 58 and arginine 100. Substrate-binding residues include arginine 107, asparagine 139, and arginine 170. Asparagine 139 is a binding site for NAD(+). The active-site Proton acceptor is the histidine 194. A substrate-binding site is contributed by threonine 249.

This sequence belongs to the LDH/MDH superfamily. LDH family. Homotetramer.

Its subcellular location is the cytoplasm. It carries out the reaction (S)-lactate + NAD(+) = pyruvate + NADH + H(+). The protein operates within fermentation; pyruvate fermentation to lactate; (S)-lactate from pyruvate: step 1/1. The chain is L-lactate dehydrogenase B-B chain from Danio rerio (Zebrafish).